Reading from the N-terminus, the 611-residue chain is Elongation factor 4 (611 aa).

The tr-type G domain maps to 12 to 194 (SRIRNFSIIA…QIVEKVPAPA (183 aa)). GTP is bound by residues 24 to 29 (DHGKST) and 141 to 144 (NKID).

It belongs to the TRAFAC class translation factor GTPase superfamily. Classic translation factor GTPase family. LepA subfamily.

The protein localises to the cell membrane. It carries out the reaction GTP + H2O = GDP + phosphate + H(+). Required for accurate and efficient protein synthesis under certain stress conditions. May act as a fidelity factor of the translation reaction, by catalyzing a one-codon backward translocation of tRNAs on improperly translocated ribosomes. Back-translocation proceeds from a post-translocation (POST) complex to a pre-translocation (PRE) complex, thus giving elongation factor G a second chance to translocate the tRNAs correctly. Binds to ribosomes in a GTP-dependent manner. The polypeptide is Elongation factor 4 (Bacillus velezensis (strain DSM 23117 / BGSC 10A6 / LMG 26770 / FZB42) (Bacillus amyloliquefaciens subsp. plantarum)).